The primary structure comprises 215 residues: MTQCSAFSGIFFRNWIFIRGVPTIQFLPPEGPPEIAFAGRSNVGKSSLINALVQQKGLARTSNTPGRTQELNYFVPDGFSGSKEDFPPMALVDMPGYGFAQAPKNLVDAWTHLVFNYLRGRTTLKRVYILIDSRHGIKKNDEEVLDLLDKAAVSYQIILTKSDKIKSNMLENLMTTTQMSLLKRPAAYPELLTTSAEKALGLEELRTAILQAVVQ.

The region spanning 31–215 (GPPEIAFAGR…RTAILQAVVQ (185 aa)) is the EngB-type G domain. GTP contacts are provided by residues 39–46 (GRSNVGKS), 66–70 (GRTQE), 93–96 (DMPG), 160–163 (TKSD), and 194–196 (TSA). Residues Ser46 and Thr68 each contribute to the Mg(2+) site.

This sequence belongs to the TRAFAC class TrmE-Era-EngA-EngB-Septin-like GTPase superfamily. EngB GTPase family. Mg(2+) serves as cofactor.

Functionally, necessary for normal cell division and for the maintenance of normal septation. This Bartonella bacilliformis (strain ATCC 35685 / KC583 / Herrer 020/F12,63) protein is Probable GTP-binding protein EngB.